The sequence spans 373 residues: Enoyl-[acyl-carrier-protein] reductase, mitochondrial (373 aa).

The transit peptide at 1–53 (MWVCSTLWRVRTPARQWRGLLPASGCHGPAASSYSASAEPARVRALVYGHHGD) directs the protein to the mitochondrion. K61 bears the N6-acetyllysine; alternate mark. Position 61 is an N6-succinyllysine; alternate (K61). Residue Y94 is the Proton donor of the active site. Residues N167, 193–196 (NSGV), and 216–218 (RDR) contribute to the NADP(+) site. K252 and K267 each carry N6-acetyllysine; alternate. N6-succinyllysine; alternate occurs at positions 252 and 267. NADP(+)-binding positions include 285–288 (YGGM) and 310–312 (FWL). The residue at position 316 (K316) is an N6-succinyllysine. Position 368 (K368) interacts with NADP(+).

This sequence belongs to the zinc-containing alcohol dehydrogenase family. Quinone oxidoreductase subfamily. As to quaternary structure, homodimer. Isoform 2 interacts with PPARA in the nucleus and increases its activity. In terms of tissue distribution, highly expressed in skeletal and heart muscle. Expressed at lower level in placenta, liver, kidney and pancreas. Weakly or not expressed in lung.

The protein localises to the mitochondrion. Its subcellular location is the cytoplasm. The protein resides in the nucleus. The catalysed reaction is a 2,3-saturated acyl-[ACP] + NADP(+) = a (2E)-enoyl-[ACP] + NADPH + H(+). The enzyme catalyses (2E)-butenoyl-[ACP] + NADPH + H(+) = butanoyl-[ACP] + NADP(+). It carries out the reaction (2E)-hexenoyl-[ACP] + NADPH + H(+) = hexanoyl-[ACP] + NADP(+). It catalyses the reaction (2E)-octenoyl-[ACP] + NADPH + H(+) = octanoyl-[ACP] + NADP(+). The catalysed reaction is (2E)-decenoyl-[ACP] + NADPH + H(+) = decanoyl-[ACP] + NADP(+). The enzyme catalyses (2E)-dodecenoyl-[ACP] + NADPH + H(+) = dodecanoyl-[ACP] + NADP(+). It carries out the reaction (2E)-tetradecenoyl-[ACP] + NADPH + H(+) = tetradecanoyl-[ACP] + NADP(+). It catalyses the reaction (2E)-hexadecenoyl-[ACP] + NADPH + H(+) = hexadecanoyl-[ACP] + NADP(+). Functionally, catalyzes the NADPH-dependent reduction of trans-2-enoyl thioesters in mitochondrial fatty acid synthesis (fatty acid synthesis type II). Fatty acid chain elongation in mitochondria uses acyl carrier protein (ACP) as an acyl group carrier, but the enzyme accepts both ACP and CoA thioesters as substrates in vitro. Displays a preference for medium-chain over short- and long-chain substrates. May provide the octanoyl chain used for lipoic acid biosynthesis, regulating protein lipoylation and mitochondrial respiratory activity particularly in Purkinje cells. Involved in iron homeostasis; affecting Fe-S cluster assembly and ceramide metabolism. Required for proper morphology and bioenergetic functions of mitochondria. Required for maintenance of neurons. The chain is Enoyl-[acyl-carrier-protein] reductase, mitochondrial (MECR) from Homo sapiens (Human).